Consider the following 585-residue polypeptide: ATP-dependent lipid A-core flippase (585 aa).

The next 6 helical transmembrane spans lie at 18 to 38 (LWPT…ALVL), 68 to 88 (LMAV…FISS), 142 to 162 (SNAL…LAVM), 163 to 183 (IATS…IAVL), 255 to 275 (PIVQ…ATIP), and 277 to 297 (IMSQ…MLAM). Residues 30–313 (IAAAAALVLN…LTNVNSQFQR (284 aa)) enclose the ABC transmembrane type-1 domain. The ABC transporter domain maps to 345-581 (VSFKDVSFTY…NGAYKQLHKM (237 aa)). 379 to 386 (GRSGSGKS) is an ATP binding site.

Belongs to the ABC transporter superfamily. Lipid exporter (TC 3.A.1.106) family. In terms of assembly, homodimer.

It is found in the cell inner membrane. The enzyme catalyses ATP + H2O + lipid A-core oligosaccharideSide 1 = ADP + phosphate + lipid A-core oligosaccharideSide 2.. Involved in lipopolysaccharide (LPS) biosynthesis. Translocates lipid A-core from the inner to the outer leaflet of the inner membrane. Transmembrane domains (TMD) form a pore in the inner membrane and the ATP-binding domain (NBD) is responsible for energy generation. The chain is ATP-dependent lipid A-core flippase from Mannheimia succiniciproducens (strain KCTC 0769BP / MBEL55E).